A 260-amino-acid polypeptide reads, in one-letter code: Transcription factor BEE 1 (260 aa).

Positions 118-139 are disordered; that stretch reads ETGSLRRGKRLKKKKEEEDEKE. The region spanning 151 to 201 is the bHLH domain; that stretch reads QATDSHSLAERVRRGKINERLRCLQDMVPGCYKAMGMATMLDEIINYVQSL.

It localises to the nucleus. Functionally, positive regulator of brassinosteroid signaling. The sequence is that of Transcription factor BEE 1 (BEE1) from Arabidopsis thaliana (Mouse-ear cress).